The sequence spans 322 residues: Deoxycytidylate deaminase (322 aa).

One can recognise a CMP/dCMP-type deaminase domain in the interval 173-311; the sequence is SWDSYFMEMA…SLLQAAGVQL (139 aa). H246 is a Zn(2+) binding site. E248 serves as the catalytic Proton donor. Residues C273 and C276 each coordinate Zn(2+).

The protein belongs to the cytidine and deoxycytidylate deaminase family. The cofactor is Zn(2+).

It is found in the cytoplasm. Its subcellular location is the nucleus. The enzyme catalyses dCMP + H2O + H(+) = dUMP + NH4(+). Its function is as follows. Supplies the nucleotide substrate for thymidylate synthetase. This chain is Deoxycytidylate deaminase, found in Schizosaccharomyces pombe (strain 972 / ATCC 24843) (Fission yeast).